A 274-amino-acid chain; its full sequence is Undecaprenyl-diphosphatase (274 aa).

A run of 8 helical transmembrane segments spans residues 4 to 24, 46 to 66, 86 to 106, 109 to 129, 145 to 165, 188 to 208, 214 to 234, and 250 to 270; these read LLVIKAIIMGIVEGITELLPI, VVFEIFIQMGAMLAIVWEYRV, INVAIAFFPAALVGFLFSDFI, VLFSPYVVAGGFIVGGVIIMW, ISYADAFNVGLCQCLALIPGT, FSFFLAIPMIGAASLYALWEA, IEDMGILAIGFITSFFVTFAV, and FAWYRIAFGLLVLATAYTGVI.

The protein belongs to the UppP family.

It is found in the cell inner membrane. It carries out the reaction di-trans,octa-cis-undecaprenyl diphosphate + H2O = di-trans,octa-cis-undecaprenyl phosphate + phosphate + H(+). Its function is as follows. Catalyzes the dephosphorylation of undecaprenyl diphosphate (UPP). Confers resistance to bacitracin. This is Undecaprenyl-diphosphatase from Cellvibrio japonicus (strain Ueda107) (Pseudomonas fluorescens subsp. cellulosa).